Consider the following 227-residue polypeptide: YEATS domain-containing protein 4 (227 aa).

In terms of domain architecture, YEATS spans 15 to 158; sequence RVKGVTIVKP…AMMQQLLTTS (144 aa). A Glycyl lysine isopeptide (Lys-Gly) (interchain with G-Cter in SUMO2) cross-link involves residue Lys37. Residues 93–97 are diacetylated histone H3 binding; that stretch reads WGEFE. Residues 163 to 227 are interaction with MLLT10; the sequence is LGAYKHETEF…LEEDDQTKDI (65 aa). Residues 168–227 form an interaction with TACC1 region; it reads HETEFAELEVKTREKLEAAKKKTSFEIAELKERLKASRETINCLKNEIRKLEEDDQTKDI. Residues 178–226 are a coiled coil; the sequence is KTREKLEAAKKKTSFEIAELKERLKASRETINCLKNEIRKLEEDDQTKD.

Component of numerous complexes with chromatin remodeling and histone acetyltransferase activity. Component of the NuA4 histone acetyltransferase complex which contains the catalytic subunit KAT5/TIP60 and the subunits EP400, TRRAP/PAF400, BRD8/SMAP, EPC1, DMAP1/DNMAP1, RUVBL1/TIP49, RUVBL2, ING3, actin, ACTL6A/BAF53A, MORF4L1/MRG15, MORF4L2/MRGX, MRGBP, YEATS4/GAS41, VPS72/YL1 and MEAF6. The NuA4 complex interacts with MYC and the adenovirus E1A protein. Component of a NuA4-related complex which contains EP400, TRRAP/PAF400, SRCAP, BRD8/SMAP, EPC1, DMAP1/DNMAP1, RUVBL1/TIP49, RUVBL2, actin, ACTL6A/BAF53A, VPS72 and YEATS4/GAS41. Interacts with MLLT10/AF10. Also interacts with the SWI/SNF component SMARCB1/BAF47, TACC1 and TACC2, and the nuclear matrix protein NUMA1.

It localises to the nucleus. In terms of biological role, chromatin reader component of the NuA4 histone acetyltransferase (HAT) complex, a complex involved in transcriptional activation of select genes principally by acetylation of nucleosomal histones H4 and H2A. Specifically recognizes and binds acylated histone H3, with a preference for histone H3 diacetylated at 'Lys-18' and 'Lys-27' (H3K18ac and H3K27ac) or histone H3 diacetylated at 'Lys-14' and 'Lys-27' (H3K14ac and H3K27ac). Also able to recognize and bind crotonylated histone H3. May also recognize and bind histone H3 succinylated at 'Lys-122' (H3K122succ); additional evidences are however required to confirm this result in vivo. Plays a key role in histone variant H2AZ1/H2A.Z deposition into specific chromatin regions: recognizes and binds H3K14ac and H3K27ac on the promoters of actively transcribed genes and recruits NuA4-related complex to deposit H2AZ1/H2A.Z. H2AZ1/H2A.Z deposition is required for maintenance of embryonic stem cell. In Mus musculus (Mouse), this protein is YEATS domain-containing protein 4.